The sequence spans 1770 residues: Transposon Ty2-DR2 Gag-Pol polyprotein (1770 aa).

Composition is skewed to polar residues over residues 1–39 and 49–60; these read MESQQLHQNPHSQHGSAYASVTSKEVPSNQDPLAVSASN and KVNSQEETTPGT. Disordered stretches follow at residues 1 to 89 and 360 to 449; these read MESQ…QQHG and HSEY…SNDE. The tract at residues 295–397 is RNA-binding; sequence ENNINVSDRL…SSKPRAAKAH (103 aa). Over residues 369 to 381 the composition is skewed to low complexity; the sequence is TSPNTTNTKVTTR. Polar residues-rich tracts occupy residues 399-408 and 415-435; these read IATSSKFSRV and ESTVSSQYLSDDNELSLGQQQ. The For protease activity; shared with dimeric partner role is filled by Asp457. The interval 579–636 is integrase-type zinc finger-like; it reads NVNKSKSVNKYPYPLIHRMLGHANFRSIQKSLKKNAVTYLKESDIEWSNASTYQCPDC. Positions 656 to 831 constitute an Integrase catalytic domain; it reads ESYEPFQYLH…AGLDITTILP (176 aa). Residues Asp667 and Asp732 each contribute to the Mg(2+) site. 3 disordered regions span residues 1005-1038, 1059-1135, and 1171-1222; these read GGTIESDTTSPRHSSTFTARNQKRPGSPNDMIDL, TEEP…KSSK, and SRQT…LEPP. 2 stretches are compositionally biased toward polar residues: residues 1009 to 1024 and 1065 to 1082; these read ESDTTSPRHSSTFTAR and QRNSDTNIKYRTTNSTPS. The Bipartite nuclear localization signal signature appears at 1193-1227; it reads KKRSLEDNETEIEVSRDTWNNKNMRSLEPPRSKKR. One can recognise a Reverse transcriptase Ty1/copia-type domain in the interval 1353-1491; the sequence is NDYYITQLDI…DILGLEIKYQ (139 aa). 6 residues coordinate Mg(2+): Asp1361, Asp1442, Asp1443, Asp1625, Glu1667, and Asp1700. The RNase H Ty1/copia-type domain occupies 1625–1767; that stretch reads DASYGNQPYY…IKTFKLLTNK (143 aa).

The capsid protein forms a homotrimer, from which the VLPs are assembled. The protease is a homodimer, whose active site consists of two apposed aspartic acid residues. Initially, virus-like particles (VLPs) are composed of the structural unprocessed proteins Gag and Gag-Pol, and also contain the host initiator methionine tRNA (tRNA(i)-Met) which serves as a primer for minus-strand DNA synthesis, and a dimer of genomic Ty RNA. Processing of the polyproteins occurs within the particle and proceeds by an ordered pathway, called maturation. First, the protease (PR) is released by autocatalytic cleavage of the Gag-Pol polyprotein, and this cleavage is a prerequisite for subsequent processing at the remaining sites to release the mature structural and catalytic proteins. Maturation takes place prior to the RT reaction and is required to produce transposition-competent VLPs.

Its subcellular location is the cytoplasm. The protein resides in the nucleus. It catalyses the reaction DNA(n) + a 2'-deoxyribonucleoside 5'-triphosphate = DNA(n+1) + diphosphate. The catalysed reaction is Endonucleolytic cleavage to 5'-phosphomonoester.. Capsid protein (CA) is the structural component of the virus-like particle (VLP), forming the shell that encapsulates the retrotransposons dimeric RNA genome. The particles are assembled from trimer-clustered units and there are holes in the capsid shells that allow for the diffusion of macromolecules. CA also has nucleocapsid-like chaperone activity, promoting primer tRNA(i)-Met annealing to the multipartite primer-binding site (PBS), dimerization of Ty2 RNA and initiation of reverse transcription. In terms of biological role, the aspartyl protease (PR) mediates the proteolytic cleavages of the Gag and Gag-Pol polyproteins after assembly of the VLP. Its function is as follows. Reverse transcriptase/ribonuclease H (RT) is a multifunctional enzyme that catalyzes the conversion of the retro-elements RNA genome into dsDNA within the VLP. The enzyme displays a DNA polymerase activity that can copy either DNA or RNA templates, and a ribonuclease H (RNase H) activity that cleaves the RNA strand of RNA-DNA heteroduplexes during plus-strand synthesis and hydrolyzes RNA primers. The conversion leads to a linear dsDNA copy of the retrotransposon that includes long terminal repeats (LTRs) at both ends. Functionally, integrase (IN) targets the VLP to the nucleus, where a subparticle preintegration complex (PIC) containing at least integrase and the newly synthesized dsDNA copy of the retrotransposon must transit the nuclear membrane. Once in the nucleus, integrase performs the integration of the dsDNA into the host genome. In Saccharomyces cerevisiae (strain ATCC 204508 / S288c) (Baker's yeast), this protein is Transposon Ty2-DR2 Gag-Pol polyprotein (TY2B-DR2).